The primary structure comprises 322 residues: GRB2-related adaptor protein 2 (322 aa).

The 56-residue stretch at 1 to 56 folds into the SH3 1 domain; sequence MEATAKFDFMASGEDELSFRTGDILKILSNQEEWLKAELGSQEGYVPKNFIDIEFP. The residue at position 45 (Tyr-45) is a Phosphotyrosine. An SH2 domain is found at 58–149; that stretch reads WFHEGLSRHQ…QKQVFLRDGT (92 aa). Lys-106 bears the N6-acetyllysine mark. Residues 143–216 are disordered; that stretch reads VFLRDGTQDQ…TPGPQPPQQQ (74 aa). A compositionally biased stretch (basic and acidic residues) spans 148–163; it reads GTQDQGHRGNSLDRRS. Ser-186 carries the phosphoserine modification. The segment covering 193 to 204 has biased composition (low complexity); sequence PQQFHPHQQPSP. Position 230 is a phosphoserine (Ser-230). Thr-254 bears the Phosphothreonine mark. One can recognise an SH3 2 domain in the interval 263–322; sequence GRVRWARALYDFEALEEDELGFRSGEVVEVLDSSNPSWWTGRLHNKLGLFPANYVAPMMR.

Belongs to the GRB2/sem-5/DRK family. Interacts with phosphorylated LAT and LAX1 upon TCR activation. Interacts with SHB. Interacts with PTPN23. Interacts with phosphorylated LIME1 upon TCR activation.

Its subcellular location is the nucleus. It is found in the cytoplasm. It localises to the endosome. Interacts with SLP-76 to regulate NF-AT activation. Binds to tyrosine-phosphorylated shc. The chain is GRB2-related adaptor protein 2 (Grap2) from Mus musculus (Mouse).